We begin with the raw amino-acid sequence, 348 residues long: Ion-translocating oxidoreductase complex subunit D (348 aa).

Helical transmembrane passes span 25–45 (ILAALPGLAVQCYFFGWGTFI), 68–88 (PISPTLMDQSAVLTALLIGVA), and 124–144 (AMAAYVLLLVSFPVLMTTWAA). The residue at position 182 (Thr182) is an FMN phosphoryl threonine. 5 consecutive transmembrane segments (helical) span residues 211–231 (TGEGWFWVNLAYLCGGLFLLA), 237–257 (WHISGGLIGALFVCSLFGFGA), 263–283 (ASPLFNLFSGATMLAAFFIAT), 296–316 (LLFGAMIGVLIYLIRTFGGYP), and 317–337 (DGVAFAVLLANLCAPLIDYYI).

It belongs to the NqrB/RnfD family. The complex is composed of six subunits: RnfA, RnfB, RnfC, RnfD, RnfE and RnfG. FMN serves as cofactor.

The protein localises to the cell inner membrane. Part of a membrane-bound complex that couples electron transfer with translocation of ions across the membrane. This Shewanella amazonensis (strain ATCC BAA-1098 / SB2B) protein is Ion-translocating oxidoreductase complex subunit D.